A 49-amino-acid chain; its full sequence is Large ribosomal subunit protein bL32 (49 aa).

Belongs to the bacterial ribosomal protein bL32 family.

In Nitratiruptor sp. (strain SB155-2), this protein is Large ribosomal subunit protein bL32.